A 449-amino-acid chain; its full sequence is GPI mannosyltransferase 2 (449 aa).

Topologically, residues 1–7 are cytoplasmic; it reads MTEKVTK. A helical membrane pass occupies residues 8 to 28; that stretch reads LALASRLIVLLVQLVANGALP. At 29 to 82 the chain is on the lumenal side; sequence EHKPDVFRMPVSSDQNASWIDKVIKRCLGGLRHWDGEYFLHIAENLYSYENTLA. Asparagine 44 is a glycosylation site (N-linked (GlcNAc...) asparagine). Residues 83–103 form a helical membrane-spanning segment; it reads FYPLYPVVVRHVGQAVEAIGI. Residues 104–109 lie on the Cytoplasmic side of the membrane; sequence SLSQES. A helical transmembrane segment spans residues 110–130; sequence ILLVVAVALNFWLFCESANLL. Residues 131–148 are Lumenal-facing; sequence FQLTQVLFNDLNKSWNAA. Asparagine 142 carries N-linked (GlcNAc...) asparagine glycosylation. The helical transmembrane segment at 149 to 169 threads the bilayer; the sequence is LIYCFNPATIFFTAAYSETFF. Residues 170-196 lie on the Cytoplasmic side of the membrane; sequence AYSSLHLMLECSKPTGSFRYLRLGTAL. Residues 197–217 traverse the membrane as a helical segment; the sequence is AACLLCRSNGLITLGYPLYFF. Topologically, residues 218–235 are lumenal; the sequence is GRQLLLKNKEPNTCMQLT. A helical transmembrane segment spans residues 236-256; sequence QMTLTILGAIGILHTYYFYIY. The Cytoplasmic portion of the chain corresponds to 257-368; the sequence is RLYCLPNTRP…GFKELIRDHT (112 aa). A helical transmembrane segment spans residues 369 to 389; the sequence is TFPFVLHAAILTLVCTVYVHI. The Lumenal segment spans residues 390-423; sequence QVSTRLLASATPVFYWFAADHMPKTLAQLKLRSK. Residues 424 to 444 traverse the membrane as a helical segment; it reads AGALFVWCTTYSLVGTVLFSN. Over 445–449 the chain is Cytoplasmic; sequence NYPWT.

Belongs to the PIGV family.

The protein localises to the endoplasmic reticulum membrane. It participates in glycolipid biosynthesis; glycosylphosphatidylinositol-anchor biosynthesis. Its function is as follows. Mannosyltransferase involved in glycosylphosphatidylinositol-anchor biosynthesis. Transfers the second mannose to the glycosylphosphatidylinositol during GPI precursor assembly. Required for the GPI-mediated endoplasmic reticulum exit and proper targeting to the cell surface of chp. Required for GPI-mediated membrane attachment of chp, qsm and Cont. Essential for microvillar stability in the rhabdomere. The chain is GPI mannosyltransferase 2 from Drosophila melanogaster (Fruit fly).